We begin with the raw amino-acid sequence, 533 residues long: (E)-beta-farnesene synthase (533 aa).

The Mg(2+) site is built by Asp286 and Asp290. Positions 286, 290, 427, and 430 each coordinate substrate. The DDXXD motif signature appears at 286–290 (DDMMD). Asn430 and Glu438 together coordinate Mg(2+).

It belongs to the terpene synthase family. Monomer. Mg(2+) is required as a cofactor. It depends on Mn(2+) as a cofactor.

It is found in the cytoplasm. It catalyses the reaction (2E,6E)-farnesyl diphosphate = (E)-beta-farnesene + diphosphate. The enzyme catalyses (2E,6E)-farnesyl diphosphate = alpha-copaene + diphosphate. It carries out the reaction (2E,6E)-farnesyl diphosphate = (1S,5S,6R)-alpha-bergamotene + diphosphate. The catalysed reaction is (2E,6E)-farnesyl diphosphate = (-)-(E)-beta-caryophyllene + diphosphate. It catalyses the reaction (2E,6E)-farnesyl diphosphate = delta-cadinene + diphosphate. The enzyme catalyses (2E,6E)-farnesyl diphosphate = (+)-germacrene D + diphosphate. It carries out the reaction (2E,6E)-farnesyl diphosphate = alpha-zingiberene + diphosphate. The catalysed reaction is (2E,6E)-farnesyl diphosphate = alpha-muurolene + diphosphate. It catalyses the reaction (2E,6E)-farnesyl diphosphate = (S)-beta-bisabolene + diphosphate. The enzyme catalyses (2E,6E)-farnesyl diphosphate = beta-sesquiphellandrene + diphosphate. It carries out the reaction (2E,6E)-farnesyl diphosphate = sesquisabinene A + diphosphate. Its pathway is secondary metabolite biosynthesis; terpenoid biosynthesis. In terms of biological role, sesquiterpene cyclase catalyzing mainly the production of beta-farnesene and alpha-bergamotene in equal amounts from farnesyl diphosphate. Also mediates the biosynthesis of minor sesquiterpene hydrocarbons including alpha-muurolene, beta-bisabolene, zingiberene, sesquiphellandrene, sesquisabinene A, germacrene D, delta-cadinene, alpha-copaene and (E)-beta-caryophyllene. Involved in indirect defense by producing volatile signals attracting natural enemies of herbivores. The sequence is that of (E)-beta-farnesene synthase from Zea mays (Maize).